Reading from the N-terminus, the 111-residue chain is COX assembly mitochondrial protein (111 aa).

Residues 39–82 form the CHCH domain; the sequence is YKKCANFVQAMADCAKANGMKVFPTCDKQRDEMKSCLLFYQTDE. 2 consecutive short sequence motifs (cx9C motif) follow at residues 42-52 and 64-74; these read CANFVQAMADC and CDKQRDEMKSC. Cystine bridges form between cysteine 42–cysteine 74 and cysteine 52–cysteine 64.

The protein belongs to the CMC family.

It is found in the mitochondrion inner membrane. Its function is as follows. Required for mitochondrial cytochrome c oxidase (COX) assembly and respiration. Binds copper. May be involved in copper trafficking and distribution to mitochondrial COX and SOD1. The chain is COX assembly mitochondrial protein (CMC1) from Saccharomyces cerevisiae (strain YJM789) (Baker's yeast).